We begin with the raw amino-acid sequence, 480 residues long: Glycerol-3-phosphate transporter (480 aa).

Residues M1–F36 are Cytoplasmic-facing. The chain crosses the membrane as a helical span at residues G37–Q57. The Periplasmic portion of the chain corresponds to A58–A64. Residues E65–A85 traverse the membrane as a helical segment. Topologically, residues G86–R94 are cytoplasmic. Residues V95–L113 form a helical membrane-spanning segment. At F114–I121 the chain is on the periplasmic side. Residues A122–C142 form a helical membrane-spanning segment. Over G143–I161 the chain is Cytoplasmic. The chain crosses the membrane as a helical span at residues W162–S181. The Periplasmic portion of the chain corresponds to A182–S201. Residues L202–V219 form a helical membrane-spanning segment. The Cytoplasmic portion of the chain corresponds to M220–A274. The chain crosses the membrane as a helical span at residues N275 to E295. Topologically, residues V296–N300 are periplasmic. The helical transmembrane segment at I301–L321 threads the bilayer. The Cytoplasmic segment spans residues C322–R334. The chain crosses the membrane as a helical span at residues G335 to M354. Over N355–P359 the chain is Periplasmic. A helical membrane pass occupies residues E360–I396. Topologically, residues G397 to F415 are cytoplasmic. A helical transmembrane segment spans residues T416–Q437. Residues H438–D442 are Periplasmic-facing. Residues G443–M463 traverse the membrane as a helical segment. Residues V464–T479 are Cytoplasmic-facing.

It belongs to the major facilitator superfamily. Organophosphate:Pi antiporter (OPA) (TC 2.A.1.4) family.

The protein localises to the cell inner membrane. Its function is as follows. Responsible for glycerol-3-phosphate uptake. In Haemophilus influenzae (strain ATCC 51907 / DSM 11121 / KW20 / Rd), this protein is Glycerol-3-phosphate transporter (glpT).